We begin with the raw amino-acid sequence, 811 residues long: Leucine--tRNA ligase (811 aa).

A 'HIGH' region motif is present at residues 38 to 49; it reads SYPSGSNLHAGH. The 'KMSKS' region signature appears at 570-574; sequence KMSKS. ATP is bound at residue lysine 573.

The protein belongs to the class-I aminoacyl-tRNA synthetase family.

It localises to the cytoplasm. It catalyses the reaction tRNA(Leu) + L-leucine + ATP = L-leucyl-tRNA(Leu) + AMP + diphosphate. In Clostridium kluyveri (strain ATCC 8527 / DSM 555 / NBRC 12016 / NCIMB 10680 / K1), this protein is Leucine--tRNA ligase.